Here is a 424-residue protein sequence, read N- to C-terminus: Protein SamB (424 aa).

Residues 2–189 enclose the UmuC domain; the sequence is FALADVNSFY…QPVEEIWGVG (188 aa).

This sequence belongs to the DNA polymerase type-Y family.

In terms of biological role, involved in UV protection and mutation. The protein is Protein SamB (samB) of Salmonella typhimurium.